A 726-amino-acid chain; its full sequence is Sensory/regulatory protein RpfC (726 aa).

Transmembrane regions (helical) follow at residues 23–40 (NLIR…LGWR), 52–72 (TWLI…AILL), 95–115 (IMAI…WVTI), 128–148 (AATA…PYWK), and 152–172 (YLSW…DSLL). The Histidine kinase domain maps to 195-417 (NMSHEFRTPL…VFWFELPMAI (223 aa)). Phosphohistidine; by autocatalysis is present on His-198. The Response regulatory domain occupies 463-581 (RMLVADDHEA…KLLDTLADLA (119 aa)). 4-aspartylphosphate is present on Asp-512. The 94-residue stretch at 618–711 (GEEFERQFVR…KAGKDALDAR (94 aa)) folds into the HPt domain. At His-657 the chain carries Phosphohistidine.

At low DSF concentrations, interacts with RpfF. In terms of processing, autophosphorylated. Activation may require a sequential transfer of a phosphate group from a His in the primary transmitter domain, to an Asp in the receiver domain and to a His in the secondary transmitter domain.

The protein resides in the cell inner membrane. The catalysed reaction is ATP + protein L-histidine = ADP + protein N-phospho-L-histidine.. Binding of DSF to the sensor region causes allosteric change, which facilitates RpfC autophosphorylation. Functionally, hybrid sensor kinase that regulates diverse biological functions through two distinct molecular mechanisms. At low cell density, the extracellular concentration of the diffusible signaling factor (DSF) is below a threshold, and unphosphorylated RpfC is involved in the negative regulation of DSF synthesis, via direct interaction with the DSF synthase RpfF. Interaction prevents synthesis of DSF, which remains at a basal level. This activity does not involve the phosphorelay mechanism and is not dependent on RpfG. Is also member of the two-component regulatory system RpfG/RpfC, which is involved in the perception and response to DSF, which is essential for cell-cell signaling. At high cell density, the level of extracellular DSF increases and binding of DSF to the sensor region of RpfC causes autophosphorylation of RpfC, which results in the release of RpfF and the activation of RpfG via a four-step phosphorelay. Activation of RpfG leads to the positive regulation of biofilm dispersal and the production of virulence factors. The polypeptide is Sensory/regulatory protein RpfC (rpfC) (Xanthomonas campestris pv. campestris (strain ATCC 33913 / DSM 3586 / NCPPB 528 / LMG 568 / P 25)).